Consider the following 43-residue polypeptide: Protein PsbN (43 aa).

A helical transmembrane segment spans residues 4–24 (ATIIVIFVSSLLVGITAYSVY).

Belongs to the PsbN family.

It is found in the plastid. The protein resides in the chloroplast thylakoid membrane. Its function is as follows. May play a role in photosystem I and II biogenesis. The polypeptide is Protein PsbN (Thalassiosira pseudonana (Marine diatom)).